A 316-amino-acid polypeptide reads, in one-letter code: PAK4-inhibitor inka2 (316 aa).

Disordered regions lie at residues 43 to 74 (RSSP…SHRT) and 108 to 130 (YSEV…ESET). Positions 65 to 74 (RRDNRISHRT) are enriched in basic and acidic residues. The span at 119 to 129 (EEDDIVEEESE) shows a compositional bias: acidic residues. The interval 182-219 (DSQDWTGCLLSQSRSRQPLVLGDNSFADLVKQWMDLPE) is inka box.

The protein belongs to the INKA family.

It is found in the nucleus. Inhibitor of the serine/threonine-protein kinase pak4/pak5. Acts by binding pak4/pak5 in a substrate-like manner, inhibiting the protein kinase activity. This Xenopus laevis (African clawed frog) protein is PAK4-inhibitor inka2.